A 128-amino-acid chain; its full sequence is NADPH-dependent 7-cyano-7-deazaguanine reductase (128 aa).

The active-site Thioimide intermediate is the Cys34. Asp41 acts as the Proton donor in catalysis. Substrate is bound by residues 56 to 58 and 75 to 76; these read IEL and HE.

The protein belongs to the GTP cyclohydrolase I family. QueF type 1 subfamily.

Its subcellular location is the cytoplasm. The enzyme catalyses 7-aminomethyl-7-carbaguanine + 2 NADP(+) = 7-cyano-7-deazaguanine + 2 NADPH + 3 H(+). It participates in tRNA modification; tRNA-queuosine biosynthesis. In terms of biological role, catalyzes the NADPH-dependent reduction of 7-cyano-7-deazaguanine (preQ0) to 7-aminomethyl-7-deazaguanine (preQ1). The protein is NADPH-dependent 7-cyano-7-deazaguanine reductase of Ruthia magnifica subsp. Calyptogena magnifica.